The primary structure comprises 95 residues: Large ribosomal subunit protein bL25 (95 aa).

It belongs to the bacterial ribosomal protein bL25 family. As to quaternary structure, part of the 50S ribosomal subunit; part of the 5S rRNA/L5/L18/L25 subcomplex. Contacts the 5S rRNA. Binds to the 5S rRNA independently of L5 and L18.

Functionally, this is one of the proteins that binds to the 5S RNA in the ribosome where it forms part of the central protuberance. This is Large ribosomal subunit protein bL25 from Buchnera aphidicola subsp. Acyrthosiphon pisum (strain 5A).